The following is a 166-amino-acid chain: V-type proton ATPase subunit c4 (166 aa).

The Lumenal portion of the chain corresponds to 1–13 (MASSGFSGDETAP). Residues 14–34 (FFGFLGAAAALVFSCMGAAYG) traverse the membrane as a helical segment. Residues 35 to 56 (TAKSGVGVASMGVMRPELVMKS) lie on the Cytoplasmic side of the membrane. Residues 57-77 (IVPVVMAGVLGIYGLIIAVII) form a helical membrane-spanning segment. Over 78-96 (STGINPKAKSYYLFDGYAH) the chain is Lumenal. Residues 97–118 (LSSGLACGLAGLSAGMAIGIVG) form a helical membrane-spanning segment. Residues 119 to 130 (DAGVRANAQQPK) are Cytoplasmic-facing. Residues 131 to 156 (LFVGMILILIFAEALALYGLIVGIIL) form a helical membrane-spanning segment. At 157-166 (SSRAGQSRAE) the chain is on the lumenal side.

It belongs to the V-ATPase proteolipid subunit family. V-ATPase is a heteromultimeric enzyme composed of a peripheral catalytic V1 complex (components A to H) attached to an integral membrane V0 proton pore complex (components: a, c, c'', d and e). The proteolipid components c and c'' are present as a hexameric ring that forms the proton-conducting pore. Interacts with APD2.

It is found in the vacuole membrane. In terms of biological role, proton-conducting pore forming subunit of the membrane integral V0 complex of vacuolar ATPase. V-ATPase is responsible for acidifying a variety of intracellular compartments in eukaryotic cells. In Arabidopsis thaliana (Mouse-ear cress), this protein is V-type proton ATPase subunit c4 (VHA-c4).